The following is a 115-amino-acid chain: UPF0597 protein NTHI1023 (115 aa).

The protein belongs to the UPF0597 family.

In Haemophilus influenzae (strain 86-028NP), this protein is UPF0597 protein NTHI1023.